Consider the following 452-residue polypeptide: Ketoisovalerate reductase BEA2 (452 aa).

Glycine 70 to glycine 75 lines the NADP(+) pocket. Residue lysine 285 is the Proton donor of the active site. 3 residues coordinate substrate: asparagine 289, asparagine 293, and serine 393. Glutamate 405 is a binding site for NADP(+).

This sequence belongs to the ketopantoate reductase family.

The catalysed reaction is (R)-2-hydroxy-3-methylbutanoate + NADP(+) = 3-methyl-2-oxobutanoate + NADPH + H(+). In terms of biological role, ketoisovalerate reductase; part of the gene cluster that mediates the biosynthesis of beauvericin (BEA), a non-ribosomal cyclic hexadepsipeptide that shows antibiotic, antifungal, insecticidal, and cancer cell antiproliferative and antihaptotactic activity. Ketoisovalerate reductase BEA2 catalyzes the NADPH-specific reduction of ketoisovaleric acid to hydroxyisovalerate, a precursor for beauvericin biosynthesis. The nonribosomal cyclodepsipeptide synthetase BEA1 then catalyzes the formation of beauvericin via condensation and cyclization of 3 dipeptidol monomers, each composed of one unit of hydroxyisovalerate and one unit of N-methyl-phenylalanine. The polypeptide is Ketoisovalerate reductase BEA2 (Gibberella fujikuroi (strain CBS 195.34 / IMI 58289 / NRRL A-6831) (Bakanae and foot rot disease fungus)).